Reading from the N-terminus, the 217-residue chain is 3-demethoxyubiquinol 3-hydroxylase (217 aa).

Fe cation contacts are provided by E66, E96, H99, E148, E180, and H183.

It belongs to the COQ7 family. The cofactor is Fe cation.

It is found in the cell membrane. The enzyme catalyses a 5-methoxy-2-methyl-3-(all-trans-polyprenyl)benzene-1,4-diol + AH2 + O2 = a 3-demethylubiquinol + A + H2O. The protein operates within cofactor biosynthesis; ubiquinone biosynthesis. Catalyzes the hydroxylation of 2-nonaprenyl-3-methyl-6-methoxy-1,4-benzoquinol during ubiquinone biosynthesis. The protein is 3-demethoxyubiquinol 3-hydroxylase of Ralstonia pickettii (strain 12J).